We begin with the raw amino-acid sequence, 289 residues long: Bis(5'-nucleosyl)-tetraphosphatase, symmetrical (289 aa).

Belongs to the Ap4A hydrolase family.

The catalysed reaction is P(1),P(4)-bis(5'-adenosyl) tetraphosphate + H2O = 2 ADP + 2 H(+). Functionally, hydrolyzes diadenosine 5',5'''-P1,P4-tetraphosphate to yield ADP. The protein is Bis(5'-nucleosyl)-tetraphosphatase, symmetrical of Yersinia pseudotuberculosis serotype O:3 (strain YPIII).